The sequence spans 274 residues: Nitrogenase iron protein (274 aa).

Position 8 to 15 (G8 to S15) interacts with ATP. Residue C94 participates in [4Fe-4S] cluster binding. At R97 the chain carries ADP-ribosylarginine; by dinitrogenase reductase ADP-ribosyltransferase. [4Fe-4S] cluster is bound at residue C131.

Belongs to the NifH/BchL/ChlL family. In terms of assembly, homodimer. [4Fe-4S] cluster is required as a cofactor. Post-translationally, the reversible ADP-ribosylation of Arg-97 inactivates the nitrogenase reductase and regulates nitrogenase activity.

The enzyme catalyses N2 + 8 reduced [2Fe-2S]-[ferredoxin] + 16 ATP + 16 H2O = H2 + 8 oxidized [2Fe-2S]-[ferredoxin] + 2 NH4(+) + 16 ADP + 16 phosphate + 6 H(+). The key enzymatic reactions in nitrogen fixation are catalyzed by the nitrogenase complex, which has 2 components: the iron protein and the molybdenum-iron protein. This is Nitrogenase iron protein from Solidesulfovibrio magneticus (strain ATCC 700980 / DSM 13731 / RS-1) (Desulfovibrio magneticus).